Consider the following 134-residue polypeptide: Protein OPG030 (134 aa).

The BACK domain maps to 88-133 (YKENGLRNSFLRQYINNNIEEIRNTDQFLKFDVDSVCDILNNDETI).

It belongs to the orthopoxvirus OPG030 family.

The polypeptide is Protein OPG030 (OPG30) (Variola virus (isolate Human/India/Ind3/1967) (VARV)).